The primary structure comprises 124 residues: MAEITVELVSVERMLWAGQASIVTAQTTEGEIGVLPDHEPLLGQLVENGVVTIQPIDGEKLIAGVSDGFLSVSKEKVTILADFAVWANEVDTASAEADLNSDDELAKAHAEAGLRAVRRSSEGL.

The protein belongs to the ATPase epsilon chain family. In terms of assembly, F-type ATPases have 2 components, CF(1) - the catalytic core - and CF(0) - the membrane proton channel. CF(1) has five subunits: alpha(3), beta(3), gamma(1), delta(1), epsilon(1). CF(0) has three main subunits: a, b and c.

The protein localises to the cell membrane. In terms of biological role, produces ATP from ADP in the presence of a proton gradient across the membrane. In Corynebacterium glutamicum (strain ATCC 13032 / DSM 20300 / JCM 1318 / BCRC 11384 / CCUG 27702 / LMG 3730 / NBRC 12168 / NCIMB 10025 / NRRL B-2784 / 534), this protein is ATP synthase epsilon chain.